Consider the following 1133-residue polypeptide: MLGLFNNSNSINGSGNNQDIDEIKREQMSNFDQFEDGLNNNNSNNNNNNNNSNNNNSNNNENINRKTGSTLLSSSTSQLNSSSGQISFSKDAVAPTKKRRYIVDKDHIFSWTPYCKAYWNKLINVYGVELEPPQLNVSAEKGFSFSEVDNSWIYYRRNHFQLGIGVSHCFQFLESSPPLISLNGSIYPVDDFYLCIRGVKNGPDVNINEEVEVELYQTNSKREKGEEKLPPPVLMTFSTNVTIPRLHFRKATANNARKHKLPNPQQEFFRLVLTVVARAQSRDFCITSMISDPLIVRTGHPTCNPVSNNPSTPGTPISNFDSSNNNNSSSSSSIINNNNNGISGYSPHTTVTTNSTTIIPTYGSGNNNNNNNNNNNNSSGNSSSTSPMVGPLGVVFPPSPINSLSNHNSPHLTPIQYNNNNNNSNNNSNNNNNNNNNNNNSNNNNNNSNNNNHQFQSNNRIFKGNLSNPFDLNYSQNSNNNNNNNNNNNNNNNNNNNNNNNNNNNNNNNNNNNNNNNNNNNNNNNNNNNIFSHNNNNNNNNNNNNNNNNNNNNNNNNNNNNNNNNNNNSQNIHFYNNNSNNNNNNNSSSSNNNNNNNNNNNNNNNKNNNNNGNNSQINEKHNLSSNSNSSGFTAELFSSIENTIRNNNFLTQKPHFPFDQTLHQLQFQAQNNQYDQINGKLDNIHNNSNNNSSNNNNSNNNSSNNNSNNNNNNNGSHTASVKRKLSNSYDQQNLEIESPQSYISSPTPYFVDNKQPQPQPQPQPQPQPQPQPQSQSQSQSQSQSQSQSQSQSQSQPIQQIVQQQLSSPTQFSQSEEVILSSPLQQQTIQSIQQQQPQQQVITNPLLQQPQQQQQNIISIGDMDKNIKWAQSPNGGLFHFGNVGVNSENPQEALSVNGNVSISGMMYQPSDKRVKENVKPVNSKDQLSNIMKLKIYDYQLTDEWVKSQNLTETKDRGVLAQDLNTPSNHIPNSVKHTGDRILGNGRVIKDFLVVNKDAIFLENVGATQELSKKVDNVCMELETLDKKKFEMLGHKMSELERTTIREIKKNQKRKKIFIGIGVFTLFVIFGLVAVSIVLGTRNTITKNITVYTTGSPGYLNGDCTDSESGSNSCYDSSSNSAIDTTTSTGSGSIK.

4 disordered regions span residues Gln33–Ser83, Pro305–Ser629, Gly679–Arg723, and Ile736–Val817. The span at Asn39–Ser83 shows a compositional bias: low complexity. The NDT80 DNA-binding region spans Asn40–Asn308. Polar residues predominate over residues Pro305–Pro316. The span at Ile317–Ser384 shows a compositional bias: low complexity. Positions Ile401–Tyr417 are enriched in polar residues. Low complexity predominate over residues Asn418 to Asn452. The segment covering His453–Phe470 has biased composition (polar residues). Low complexity-rich tracts occupy residues Asn473–Ser615 and Asn686–Asn714. The segment covering Ile736–Thr747 has biased composition (polar residues). Residues Gln757–Gln771 show a composition bias toward pro residues. Positions Pro772–Pro808 are enriched in low complexity. The 112-residue stretch at Ser909–Leu1020 folds into the Peptidase S74 domain. The helical transmembrane segment at Ile1055–Ile1075 threads the bilayer. Residues Ser1107–Lys1133 form a disordered region.

The protein localises to the membrane. This is an uncharacterized protein from Dictyostelium discoideum (Social amoeba).